Here is a 61-residue protein sequence, read N- to C-terminus: Large ribosomal subunit protein uL30 (61 aa).

The protein belongs to the universal ribosomal protein uL30 family. As to quaternary structure, part of the 50S ribosomal subunit.

This chain is Large ribosomal subunit protein uL30, found in Nitrosomonas europaea (strain ATCC 19718 / CIP 103999 / KCTC 2705 / NBRC 14298).